The sequence spans 261 residues: Acetoacetate decarboxylase 2 (261 aa).

Lysine 116 (schiff-base intermediate with acetoacetate) is an active-site residue.

This sequence belongs to the ADC family.

It carries out the reaction acetoacetate + H(+) = acetone + CO2. Functionally, catalyzes the conversion of acetoacetate to acetone and carbon dioxide. This chain is Acetoacetate decarboxylase 2, found in Mesorhizobium japonicum (strain LMG 29417 / CECT 9101 / MAFF 303099) (Mesorhizobium loti (strain MAFF 303099)).